Consider the following 101-residue polypeptide: Albumin (101 aa).

Albumin domains are found at residues D1–Y80 and E81–L101. H4 contacts Cu cation.

The protein belongs to the ALB/AFP/VDB family. Plasma.

It localises to the secreted. Binds water, Ca(2+), Na(+), K(+), fatty acids, hormones, bilirubin and drugs. Its main function is the regulation of the colloidal osmotic pressure of blood. This chain is Albumin (alb), found in Neoceratodus forsteri (Australian lungfish).